We begin with the raw amino-acid sequence, 399 residues long: Glutathione S-transferase LANCL1 (399 aa).

N-acetylalanine is present on Ala2. Lys142 is subject to N6-acetyllysine. Cys276 contributes to the Zn(2+) binding site. Lys317 is a glutathione binding site. Positions 322 and 323 each coordinate Zn(2+). 364 to 367 (RTPD) is a binding site for glutathione.

It belongs to the LanC-like protein family. As to quaternary structure, interacts with the C-terminal of STOM. Interacts with the EPS8 SH3 domain. Interaction with EPS8 is inhibited by glutathione binding. As to expression, strongly expressed in the brain, testis and skeletal muscle. Expressed in the neurons of the cerebellum, the germinal cells of the seminiferous tubules in testis, in liver hepoatocytes and in cardiac myocytes.

It is found in the cytoplasm. The protein localises to the cell membrane. The enzyme catalyses RX + glutathione = an S-substituted glutathione + a halide anion + H(+). The catalysed reaction is 1-chloro-2,4-dinitrobenzene + glutathione = 2,4-dinitrophenyl-S-glutathione + chloride + H(+). In terms of biological role, functions as a glutathione transferase. Catalyzes conjugation of the glutathione (GSH) to artificial substrates 1-chloro-2,4-dinitrobenzene (CDNB) and p-nitrophenyl acetate. Mitigates neuronal oxidative stress during normal postnatal development and in response to oxidative stresses probably through GSH antioxidant defense mechanism. May play a role in EPS8 signaling. Binds glutathione. This is Glutathione S-transferase LANCL1 from Rattus norvegicus (Rat).